Consider the following 509-residue polypeptide: UDP-N-acetylmuramoyl-L-alanyl-D-glutamate--2,6-diaminopimelate ligase (509 aa).

Position 32 (S32) interacts with UDP-N-acetyl-alpha-D-muramoyl-L-alanyl-D-glutamate. Residue 117–123 coordinates ATP; that stretch reads GTNGKTT. UDP-N-acetyl-alpha-D-muramoyl-L-alanyl-D-glutamate is bound by residues 159-160, S186, Q192, and R194; that span reads TT. K226 bears the N6-carboxylysine mark. Meso-2,6-diaminopimelate-binding positions include R401, 425–428, G476, and E480; that span reads DNPR. The Meso-diaminopimelate recognition motif motif lies at 425–428; that stretch reads DNPR.

It belongs to the MurCDEF family. MurE subfamily. Requires Mg(2+) as cofactor. Carboxylation is probably crucial for Mg(2+) binding and, consequently, for the gamma-phosphate positioning of ATP.

The protein localises to the cytoplasm. The catalysed reaction is UDP-N-acetyl-alpha-D-muramoyl-L-alanyl-D-glutamate + meso-2,6-diaminopimelate + ATP = UDP-N-acetyl-alpha-D-muramoyl-L-alanyl-gamma-D-glutamyl-meso-2,6-diaminopimelate + ADP + phosphate + H(+). Its pathway is cell wall biogenesis; peptidoglycan biosynthesis. In terms of biological role, catalyzes the addition of meso-diaminopimelic acid to the nucleotide precursor UDP-N-acetylmuramoyl-L-alanyl-D-glutamate (UMAG) in the biosynthesis of bacterial cell-wall peptidoglycan. The protein is UDP-N-acetylmuramoyl-L-alanyl-D-glutamate--2,6-diaminopimelate ligase of Prochlorococcus marinus (strain NATL2A).